The sequence spans 118 residues: Small ribosomal subunit protein uS13 (118 aa).

The tract at residues 91–118 (HRRSLPVRGQRTKTNARTRKGPRKPIKA) is disordered.

This sequence belongs to the universal ribosomal protein uS13 family. Part of the 30S ribosomal subunit. Forms a loose heterodimer with protein S19. Forms two bridges to the 50S subunit in the 70S ribosome.

Located at the top of the head of the 30S subunit, it contacts several helices of the 16S rRNA. In the 70S ribosome it contacts the 23S rRNA (bridge B1a) and protein L5 of the 50S subunit (bridge B1b), connecting the 2 subunits; these bridges are implicated in subunit movement. Contacts the tRNAs in the A and P-sites. This is Small ribosomal subunit protein uS13 from Francisella tularensis subsp. tularensis (strain FSC 198).